We begin with the raw amino-acid sequence, 668 residues long: uncharacterized protein (668 aa).

9 helical membrane passes run phenylalanine 182–glycine 202, proline 208–tryptophan 228, valine 286–valine 306, isoleucine 321–tyrosine 341, alanine 379–isoleucine 399, isoleucine 430–leucine 450, phenylalanine 499–phenylalanine 519, leucine 557–serine 577, and valine 587–isoleucine 607.

It is found in the membrane. This is an uncharacterized protein from Schizosaccharomyces pombe (strain 972 / ATCC 24843) (Fission yeast).